The primary structure comprises 372 residues: Carbamoyl phosphate synthase small chain (372 aa).

Residues 1-186 (MTYCKRGTEG…IHQNNSPDII (186 aa)) are CPSase. 3 residues coordinate L-glutamine: serine 52, glycine 233, and glycine 235. The Glutamine amidotransferase type-1 domain occupies 185-372 (IIVLVDCGIK…KKMVIKDEGN (188 aa)). Cysteine 261 acts as the Nucleophile in catalysis. L-glutamine is bound by residues leucine 262, glutamine 265, asparagine 303, glycine 305, and tyrosine 306. Residues histidine 345 and glutamate 347 contribute to the active site.

It belongs to the CarA family. Composed of two chains; the small (or glutamine) chain promotes the hydrolysis of glutamine to ammonia, which is used by the large (or ammonia) chain to synthesize carbamoyl phosphate. Tetramer of heterodimers (alpha,beta)4.

The catalysed reaction is hydrogencarbonate + L-glutamine + 2 ATP + H2O = carbamoyl phosphate + L-glutamate + 2 ADP + phosphate + 2 H(+). It catalyses the reaction L-glutamine + H2O = L-glutamate + NH4(+). Its pathway is amino-acid biosynthesis; L-arginine biosynthesis; carbamoyl phosphate from bicarbonate: step 1/1. It participates in pyrimidine metabolism; UMP biosynthesis via de novo pathway; (S)-dihydroorotate from bicarbonate: step 1/3. Small subunit of the glutamine-dependent carbamoyl phosphate synthetase (CPSase). CPSase catalyzes the formation of carbamoyl phosphate from the ammonia moiety of glutamine, carbonate, and phosphate donated by ATP, constituting the first step of 2 biosynthetic pathways, one leading to arginine and/or urea and the other to pyrimidine nucleotides. The small subunit (glutamine amidotransferase) binds and cleaves glutamine to supply the large subunit with the substrate ammonia. In Metallosphaera sedula (strain ATCC 51363 / DSM 5348 / JCM 9185 / NBRC 15509 / TH2), this protein is Carbamoyl phosphate synthase small chain.